The following is a 319-amino-acid chain: Protein MGF 360-8L (319 aa).

Belongs to the asfivirus MGF 360 family.

Plays a role in virus cell tropism, and may be required for efficient virus replication in macrophages. This is Protein MGF 360-8L from Ornithodoros (relapsing fever ticks).